Here is a 179-residue protein sequence, read N- to C-terminus: Protein GrpE (179 aa).

Belongs to the GrpE family. In terms of assembly, homodimer.

The protein resides in the cytoplasm. Functionally, participates actively in the response to hyperosmotic and heat shock by preventing the aggregation of stress-denatured proteins, in association with DnaK and GrpE. It is the nucleotide exchange factor for DnaK and may function as a thermosensor. Unfolded proteins bind initially to DnaJ; upon interaction with the DnaJ-bound protein, DnaK hydrolyzes its bound ATP, resulting in the formation of a stable complex. GrpE releases ADP from DnaK; ATP binding to DnaK triggers the release of the substrate protein, thus completing the reaction cycle. Several rounds of ATP-dependent interactions between DnaJ, DnaK and GrpE are required for fully efficient folding. The sequence is that of Protein GrpE from Rickettsia felis (strain ATCC VR-1525 / URRWXCal2) (Rickettsia azadi).